A 308-amino-acid polypeptide reads, in one-letter code: 4-diphosphocytidyl-2-C-methyl-D-erythritol kinase (308 aa).

Lysine 23 is a catalytic residue. An ATP-binding site is contributed by 108–118 (PVAAGIGGGSA). Aspartate 150 is a catalytic residue.

This sequence belongs to the GHMP kinase family. IspE subfamily.

It catalyses the reaction 4-CDP-2-C-methyl-D-erythritol + ATP = 4-CDP-2-C-methyl-D-erythritol 2-phosphate + ADP + H(+). It participates in isoprenoid biosynthesis; isopentenyl diphosphate biosynthesis via DXP pathway; isopentenyl diphosphate from 1-deoxy-D-xylulose 5-phosphate: step 3/6. Functionally, catalyzes the phosphorylation of the position 2 hydroxy group of 4-diphosphocytidyl-2C-methyl-D-erythritol. The polypeptide is 4-diphosphocytidyl-2-C-methyl-D-erythritol kinase (Nitrobacter winogradskyi (strain ATCC 25391 / DSM 10237 / CIP 104748 / NCIMB 11846 / Nb-255)).